The chain runs to 815 residues: Phenylalanine--tRNA ligase beta subunit (815 aa).

The tRNA-binding domain maps to 39-148 (ATELQKFEVA…EYAVVGDNFT (110 aa)). One can recognise a B5 domain in the interval 420–495 (LQKIPLDFSV…RIYGYDKIES (76 aa)). Residues Asp473, Asp479, Glu482, and Glu483 each coordinate Mg(2+). Residues 721-814 (SDFQANFRDY…ISQKFQGTLR (94 aa)) form the FDX-ACB domain.

It belongs to the phenylalanyl-tRNA synthetase beta subunit family. Type 1 subfamily. In terms of assembly, tetramer of two alpha and two beta subunits. Mg(2+) is required as a cofactor.

The protein resides in the cytoplasm. The catalysed reaction is tRNA(Phe) + L-phenylalanine + ATP = L-phenylalanyl-tRNA(Phe) + AMP + diphosphate + H(+). The chain is Phenylalanine--tRNA ligase beta subunit from Rickettsia typhi (strain ATCC VR-144 / Wilmington).